The primary structure comprises 100 residues: Carboxysome shell vertex protein CcmL (100 aa).

The region spanning 1–83 is the BMV domain; the sequence is MQLAKVLGTV…LDAMVVGIID (83 aa).

It belongs to the CcmL/EutN family. CcmL subfamily. Homopentamer. Interacts with full-length CcmM.

The protein localises to the carboxysome. Its function is as follows. Probably forms vertices in the carboxysome, a polyhedral inclusion where RuBisCO (ribulose bisphosphate carboxylase, rbcL-rbcS) is sequestered. Has been modeled to induce curvature upon insertion into an otherwise flat hexagonal molecular layer of CcmK subunits. This is Carboxysome shell vertex protein CcmL from Synechocystis sp. (strain ATCC 27184 / PCC 6803 / Kazusa).